The primary structure comprises 209 residues: Uracil phosphoribosyltransferase (209 aa).

Residues Arg79, Arg104, and 131-139 (DPMLATGGS) each bind 5-phospho-alpha-D-ribose 1-diphosphate. Residues Ile194 and 199 to 201 (GDA) contribute to the uracil site. Position 200 (Asp200) interacts with 5-phospho-alpha-D-ribose 1-diphosphate.

The protein belongs to the UPRTase family. It depends on Mg(2+) as a cofactor.

The catalysed reaction is UMP + diphosphate = 5-phospho-alpha-D-ribose 1-diphosphate + uracil. It functions in the pathway pyrimidine metabolism; UMP biosynthesis via salvage pathway; UMP from uracil: step 1/1. Its activity is regulated as follows. Allosterically activated by GTP. Catalyzes the conversion of uracil and 5-phospho-alpha-D-ribose 1-diphosphate (PRPP) to UMP and diphosphate. This Enterococcus faecalis (strain ATCC 700802 / V583) protein is Uracil phosphoribosyltransferase.